A 412-amino-acid polypeptide reads, in one-letter code: BSD domain-containing protein 1 (412 aa).

Residues Trp-146–Glu-198 enclose the BSD domain. Basic and acidic residues-rich tracts occupy residues Lys-208–Glu-219 and His-255–Thr-271. Disordered stretches follow at residues Lys-208–Asp-228 and His-255–Phe-383. The segment covering Ser-272–Thr-287 has biased composition (low complexity). The span at Thr-340–Val-351 shows a compositional bias: basic and acidic residues. Residues Asn-355–Asp-374 show a composition bias toward polar residues.

The sequence is that of BSD domain-containing protein 1 (bsdc1) from Xenopus tropicalis (Western clawed frog).